Consider the following 349-residue polypeptide: Succinylglutamate desuccinylase (349 aa).

Residues His70, Glu73, and His166 each coordinate Zn(2+). Glu229 is an active-site residue.

The protein belongs to the AspA/AstE family. Succinylglutamate desuccinylase subfamily. Zn(2+) is required as a cofactor.

The catalysed reaction is N-succinyl-L-glutamate + H2O = L-glutamate + succinate. Its pathway is amino-acid degradation; L-arginine degradation via AST pathway; L-glutamate and succinate from L-arginine: step 5/5. Its function is as follows. Transforms N(2)-succinylglutamate into succinate and glutamate. The polypeptide is Succinylglutamate desuccinylase (Burkholderia thailandensis (strain ATCC 700388 / DSM 13276 / CCUG 48851 / CIP 106301 / E264)).